The chain runs to 88 residues: Apolipoprotein C-I (88 aa).

A signal peptide spans 1-26 (MRLILSLPVLAVVLAMVLEGPAPAQA).

Belongs to the apolipoprotein C1 family.

It localises to the secreted. Its function is as follows. Inhibitor of lipoprotein binding to the low density lipoprotein (LDL) receptor, LDL receptor-related protein, and very low density lipoprotein (VLDL) receptor. Associates with high density lipoproteins (HDL) and the triacylglycerol-rich lipoproteins in the plasma and makes up about 10% of the protein of the VLDL and 2% of that of HDL. Appears to interfere directly with fatty acid uptake and is also the major plasma inhibitor of cholesteryl ester transfer protein (CETP). Binds free fatty acids and reduces their intracellular esterification. Modulates the interaction of APOE with beta-migrating VLDL and inhibits binding of beta-VLDL to the LDL receptor-related protein. The polypeptide is Apolipoprotein C-I (APOC1) (Eidolon helvum (Straw-colored fruit bat)).